Here is a 455-residue protein sequence, read N- to C-terminus: Glutamyl-tRNA reductase (455 aa).

Residues 49–52 (TCNR), Ser109, 114–116 (EAQ), and Gln120 each bind substrate. Cys50 serves as the catalytic Nucleophile. Residue 190–195 (GAGAMG) participates in NADP(+) binding.

It belongs to the glutamyl-tRNA reductase family. As to quaternary structure, homodimer.

The catalysed reaction is (S)-4-amino-5-oxopentanoate + tRNA(Glu) + NADP(+) = L-glutamyl-tRNA(Glu) + NADPH + H(+). It functions in the pathway porphyrin-containing compound metabolism; protoporphyrin-IX biosynthesis; 5-aminolevulinate from L-glutamyl-tRNA(Glu): step 1/2. In terms of biological role, catalyzes the NADPH-dependent reduction of glutamyl-tRNA(Glu) to glutamate 1-semialdehyde (GSA). The protein is Glutamyl-tRNA reductase of Salinispora tropica (strain ATCC BAA-916 / DSM 44818 / JCM 13857 / NBRC 105044 / CNB-440).